Reading from the N-terminus, the 430-residue chain is Adenylosuccinate synthetase (430 aa).

GTP-binding positions include 12–18 (GDEGKGK) and 40–42 (GHT). Asp-13 (proton acceptor) is an active-site residue. 2 residues coordinate Mg(2+): Asp-13 and Gly-40. Residues 13-16 (DEGK), 38-41 (NAGH), Thr-130, Arg-144, Gln-224, Thr-239, and Arg-303 each bind IMP. His-41 acts as the Proton donor in catalysis. Substrate is bound at residue 299-305 (TVTGRKR). GTP contacts are provided by residues Arg-305, 331–333 (KLD), and 413–415 (STS).

Belongs to the adenylosuccinate synthetase family. As to quaternary structure, homodimer. Mg(2+) serves as cofactor.

It is found in the cytoplasm. The catalysed reaction is IMP + L-aspartate + GTP = N(6)-(1,2-dicarboxyethyl)-AMP + GDP + phosphate + 2 H(+). Its pathway is purine metabolism; AMP biosynthesis via de novo pathway; AMP from IMP: step 1/2. Plays an important role in the de novo pathway of purine nucleotide biosynthesis. Catalyzes the first committed step in the biosynthesis of AMP from IMP. The sequence is that of Adenylosuccinate synthetase from Methylorubrum extorquens (strain CM4 / NCIMB 13688) (Methylobacterium extorquens).